The primary structure comprises 140 residues: uncharacterized protein (140 aa).

A run of 2 helical transmembrane segments spans residues 4–21 and 26–48; these read ILKI…YLFG and LVKV…SGYL.

This sequence belongs to the bacteriophage holin family. Cp-1 holin subfamily.

Its subcellular location is the cell membrane. This is an uncharacterized protein from Listeria innocua serovar 6a (strain ATCC BAA-680 / CLIP 11262).